The following is a 624-amino-acid chain: Exocyst complex component EXO70B1 (624 aa).

The segment at 148–176 (FGLNPQGDAGAMNHRFDSEEEEDDDRDFN) is disordered.

Belongs to the EXO70 family. In terms of assembly, interacts with EXO70B2, SEC5A and EXO84B. Binds to PUB18. Binds directly to B1L at the plasma membrane and in small vesicles. Target of the E3 ubiquitin-protein ligase PUB18 that mediates its ubiquitination and degradation via the 26S proteasome.

The protein resides in the cytoplasmic vesicle. The protein localises to the phagosome. It is found in the endomembrane system. It localises to the cell membrane. Its subcellular location is the vesicle. Its function is as follows. Component of an exocyst subcomplex specifically involved in autophagy-related, Golgi-independent membrane traffic to the vacuole. Regulates autophagosome formation and autophagy-related Golgi-independent import into the vacuole. Positive regulator of both abscisic acid (ABA)-promoted and mannitol (drought)-promoted stomatal closure. Involved in the regulation of lateral root formation. The chain is Exocyst complex component EXO70B1 from Arabidopsis thaliana (Mouse-ear cress).